We begin with the raw amino-acid sequence, 328 residues long: Tetraacyldisaccharide 4'-kinase (328 aa).

ATP is bound at residue 55–62; that stretch reads TAGGNGKT.

This sequence belongs to the LpxK family.

The catalysed reaction is a lipid A disaccharide + ATP = a lipid IVA + ADP + H(+). The protein operates within glycolipid biosynthesis; lipid IV(A) biosynthesis; lipid IV(A) from (3R)-3-hydroxytetradecanoyl-[acyl-carrier-protein] and UDP-N-acetyl-alpha-D-glucosamine: step 6/6. Its function is as follows. Transfers the gamma-phosphate of ATP to the 4'-position of a tetraacyldisaccharide 1-phosphate intermediate (termed DS-1-P) to form tetraacyldisaccharide 1,4'-bis-phosphate (lipid IVA). This is Tetraacyldisaccharide 4'-kinase from Escherichia coli O7:K1 (strain IAI39 / ExPEC).